A 399-amino-acid polypeptide reads, in one-letter code: L-methionine gamma-lyase (399 aa).

Pyridoxal 5'-phosphate is bound by residues Tyr-59–Arg-61 and Gly-89–Met-90. Tyr-114 is a binding site for substrate. Ser-209–Thr-211 serves as a coordination point for pyridoxal 5'-phosphate. Lys-212 carries the post-translational modification N6-(pyridoxal phosphate)lysine. A substrate-binding site is contributed by Arg-376.

The protein belongs to the trans-sulfuration enzymes family. L-methionine gamma-lyase subfamily. In terms of assembly, homotetramer; dimer of active dimers. It depends on pyridoxal 5'-phosphate as a cofactor.

The enzyme catalyses L-methionine + H2O = methanethiol + 2-oxobutanoate + NH4(+). In terms of biological role, catalyzes the alpha,gamma-elimination of L-methionine to produce methanethiol, 2-oxobutanoate and ammonia. The chain is L-methionine gamma-lyase from Pseudomonas deceptionensis.